Consider the following 360-residue polypeptide: Ribosomal RNA large subunit methyltransferase M (360 aa).

Residues S187, C220–G223, D239, D259, and D276 each bind S-adenosyl-L-methionine. The active-site Proton acceptor is the K305.

The protein belongs to the class I-like SAM-binding methyltransferase superfamily. RNA methyltransferase RlmE family. RlmM subfamily. As to quaternary structure, monomer.

The protein resides in the cytoplasm. The catalysed reaction is cytidine(2498) in 23S rRNA + S-adenosyl-L-methionine = 2'-O-methylcytidine(2498) in 23S rRNA + S-adenosyl-L-homocysteine + H(+). In terms of biological role, catalyzes the 2'-O-methylation at nucleotide C2498 in 23S rRNA. The chain is Ribosomal RNA large subunit methyltransferase M from Shewanella sediminis (strain HAW-EB3).